The primary structure comprises 174 residues: Large ribosomal subunit protein uL10 (174 aa).

Belongs to the universal ribosomal protein uL10 family. In terms of assembly, part of the ribosomal stalk of the 50S ribosomal subunit. The N-terminus interacts with L11 and the large rRNA to form the base of the stalk. The C-terminus forms an elongated spine to which L12 dimers bind in a sequential fashion forming a multimeric L10(L12)X complex.

Its function is as follows. Forms part of the ribosomal stalk, playing a central role in the interaction of the ribosome with GTP-bound translation factors. In Synechococcus sp. (strain RCC307), this protein is Large ribosomal subunit protein uL10.